Reading from the N-terminus, the 288-residue chain is Elongation factor Ts (288 aa).

The tract at residues 79 to 82 (TDFV) is involved in Mg(2+) ion dislocation from EF-Tu.

Belongs to the EF-Ts family.

The protein localises to the cytoplasm. In terms of biological role, associates with the EF-Tu.GDP complex and induces the exchange of GDP to GTP. It remains bound to the aminoacyl-tRNA.EF-Tu.GTP complex up to the GTP hydrolysis stage on the ribosome. The protein is Elongation factor Ts of Ehrlichia chaffeensis (strain ATCC CRL-10679 / Arkansas).